The following is a 196-amino-acid chain: Putative NADH dehydrogenase/NAD(P)H nitroreductase Reut_A1586 (196 aa).

This sequence belongs to the nitroreductase family. HadB/RutE subfamily. FMN is required as a cofactor.

The sequence is that of Putative NADH dehydrogenase/NAD(P)H nitroreductase Reut_A1586 from Cupriavidus pinatubonensis (strain JMP 134 / LMG 1197) (Cupriavidus necator (strain JMP 134)).